We begin with the raw amino-acid sequence, 106 residues long: Class II hydrophobin 6 (106 aa).

The first 16 residues, 1-16, serve as a signal peptide directing secretion; it reads MQFFTVATLFLATAFA. 4 cysteine pairs are disulfide-bonded: Cys-36/Cys-86, Cys-47/Cys-77, Cys-48/Cys-60, and Cys-87/Cys-98.

The protein belongs to the cerato-ulmin hydrophobin family. Homodimer. Homodimers further self-assemble to form highly ordered films at water-air interfaces through intermolecular interactions.

The protein resides in the secreted. It localises to the cell wall. In terms of biological role, aerial growth, conidiation, and dispersal of filamentous fungi in the environment rely upon a capability of their secreting small amphipathic proteins called hydrophobins (HPBs) with low sequence identity. Class I can self-assemble into an outermost layer of rodlet bundles on aerial cell surfaces, conferring cellular hydrophobicity that supports fungal growth, development and dispersal; whereas Class II form highly ordered films at water-air interfaces through intermolecular interactions but contribute nothing to the rodlet structure. HFB2-6 is a class II hydrophobin that has a function in root colonization. Acts as an effector in poplar by up-regulating the expression of genes related to both the jasmonic acid and salicylic acid signal transduction pathways, which not only causes induced systemic resistance (ISR), but also systemic acquired resistance (SAR), giving poplar broad-spectrum resistance to pathogens. Also induces genes related to auxin signal transduction to promote poplar growth. Plays roles in interactions with both biotic and abiotic environmental conditions such as the presence of the pathogen Alternaria alternata or nutrient starvation conditions. The protein is Class II hydrophobin 6 of Trichoderma asperellum (strain ATCC 204424 / CBS 433.97 / NBRC 101777).